We begin with the raw amino-acid sequence, 630 residues long: Adenine DNA glycosylase (630 aa).

Basic and acidic residues predominate over residues 54–72; the sequence is MRKCREKKEAEREAEREAE. Residues 54–123 are disordered; the sequence is MRKCREKKEA…ALGGDIEDLF (70 aa). Residues 73 to 123 show a composition bias toward acidic residues; the sequence is REAEEEEKAEEAEAEADKEEAEEESEEEEEEEEEEAEAEEEALGGDIEDLF. E168 (proton donor/acceptor) is an active-site residue. [4Fe-4S] cluster contacts are provided by C341, C348, C351, and C357. Residues 383–536 enclose the Nudix hydrolase domain; that stretch reads PRHDFCCVCV…RKVPPFRLQH (154 aa). The Nudix box signature appears at 427 to 451; sequence VILNEEADSATRRNAINVYLKEAFR.

It belongs to the Nth/MutY family. It depends on [4Fe-4S] cluster as a cofactor.

It localises to the nucleus. It carries out the reaction Hydrolyzes free adenine bases from 7,8-dihydro-8-oxoguanine:adenine mismatched double-stranded DNA, leaving an apurinic site.. Its function is as follows. Involved in oxidative DNA damage repair. Initiates repair of A*oxoG to C*G by removing the inappropriately paired adenine base from the DNA backbone. Possesses both adenine and 2-OH-A DNA glycosylase activities. The sequence is that of Adenine DNA glycosylase (MYH) from Arabidopsis thaliana (Mouse-ear cress).